The chain runs to 345 residues: Class I histocompatibility antigen, F10 alpha chain (345 aa).

Positions 1-22 are cleaved as a signal peptide; it reads MGPCGALGLGLLLAAVCGAAAP. The tract at residues 23–110 is alpha-1; it reads ELHTLRYIQT…ILQRRYNQTG (88 aa). At 23-301 the chain is on the extracellular side; that stretch reads ELHTLRYIQT…WEPPQPNLVP (279 aa). 2 N-linked (GlcNAc...) asparagine glycosylation sites follow: N59 and N107. The segment at 111–201 is alpha-2; sequence GSHTVQWMYG…EYGKAELGRR (91 aa). 2 disulfide bridges follow: C121-C183 and C221-C277. The segment at 202-292 is alpha-3; that stretch reads ERPEVRVWGK…SLPQPGLYSW (91 aa). One can recognise an Ig-like C1-type domain in the interval 204 to 293; that stretch reads PEVRVWGKEA…LPQPGLYSWE (90 aa). The segment at 293-301 is connecting peptide; the sequence is EPPQPNLVP. The chain crosses the membrane as a helical span at residues 302 to 324; sequence IVAGVAVAIVAIAIMVGVGFIIY. The Cytoplasmic segment spans residues 325-345; it reads RRHAGKKGKGYNIAPGSNPAI.

It belongs to the MHC class I family. Heterodimer of an alpha chain and a beta chain (beta-2-microglobulin).

The protein localises to the membrane. Involved in the presentation of foreign antigens to the immune system. The polypeptide is Class I histocompatibility antigen, F10 alpha chain (Gallus gallus (Chicken)).